A 136-amino-acid polypeptide reads, in one-letter code: Large ribosomal subunit protein bL20c (136 aa).

It belongs to the bacterial ribosomal protein bL20 family.

Its subcellular location is the plastid. The protein resides in the chloroplast. In terms of biological role, binds directly to 23S ribosomal RNA and is necessary for the in vitro assembly process of the 50S ribosomal subunit. It is not involved in the protein synthesizing functions of that subunit. This is Large ribosomal subunit protein bL20c from Huperzia lucidula (Shining clubmoss).